Consider the following 167-residue polypeptide: MELSSMKICAAIPTSRALPEVVRRMPRKRISGLEWLLQQDPGFSLVNTVKAGMIISFPSNNIYSSVCCCQSEIFKYEFSNSKKSSWIQEERHLGKNNVLYSAHDVSPEKVTSALKKTNKQTTTINNFPLQYLPGSKLLDRFLSLSRSLLCLNSWSSSLPLAPQVKKK.

This is an uncharacterized protein from Homo sapiens (Human).